The following is a 342-amino-acid chain: Probable tyrosine--tRNA ligase, cytoplasmic (342 aa).

Tyr-48 contributes to the L-tyrosine binding site. The 'HIGH' region signature appears at 53–61 (ITGKPHIGY). Residues Tyr-175, Gln-179, Asp-182, and Gln-197 each coordinate L-tyrosine. Positions 231–235 (KMSSS) match the 'KMSKS' region motif.

The protein belongs to the class-I aminoacyl-tRNA synthetase family. As to quaternary structure, homodimer.

The protein localises to the cytoplasm. It carries out the reaction tRNA(Tyr) + L-tyrosine + ATP = L-tyrosyl-tRNA(Tyr) + AMP + diphosphate + H(+). In Enterocytozoon bieneusi (strain H348) (Microsporidian parasite), this protein is Probable tyrosine--tRNA ligase, cytoplasmic.